Consider the following 371-residue polypeptide: Cytochrome b (371 aa).

A run of 4 helical transmembrane segments spans residues 32 to 52, 76 to 98, 113 to 133, and 179 to 199; these read VGFS…CLAW, FVIR…VHIF, VWAV…IGYV, and LHVL…MHLF. His-82 and His-96 together coordinate heme b. The heme b site is built by His-183 and His-197. His-202 serves as a coordination point for a ubiquinone. The next 4 membrane-spanning stretches (helical) occupy residues 227–247, 296–316, 329–349, and 350–370; these read FYLR…YFIF, LMVI…LWFV, LILF…ILAY, and PIWM…VCRL.

The protein belongs to the cytochrome b family. As to quaternary structure, the main subunits of complex b-c1 are: cytochrome b, cytochrome c1 and the Rieske protein. The cofactor is heme b.

It is found in the mitochondrion inner membrane. Functionally, component of the ubiquinol-cytochrome c reductase complex (complex III or cytochrome b-c1 complex) that is part of the mitochondrial respiratory chain. The b-c1 complex mediates electron transfer from ubiquinol to cytochrome c. Contributes to the generation of a proton gradient across the mitochondrial membrane that is then used for ATP synthesis. The chain is Cytochrome b (MT-CYB) from Leishmania tarentolae (Sauroleishmania tarentolae).